A 156-amino-acid chain; its full sequence is SsrA-binding protein (156 aa).

The protein belongs to the SmpB family.

It localises to the cytoplasm. In terms of biological role, required for rescue of stalled ribosomes mediated by trans-translation. Binds to transfer-messenger RNA (tmRNA), required for stable association of tmRNA with ribosomes. tmRNA and SmpB together mimic tRNA shape, replacing the anticodon stem-loop with SmpB. tmRNA is encoded by the ssrA gene; the 2 termini fold to resemble tRNA(Ala) and it encodes a 'tag peptide', a short internal open reading frame. During trans-translation Ala-aminoacylated tmRNA acts like a tRNA, entering the A-site of stalled ribosomes, displacing the stalled mRNA. The ribosome then switches to translate the ORF on the tmRNA; the nascent peptide is terminated with the 'tag peptide' encoded by the tmRNA and targeted for degradation. The ribosome is freed to recommence translation, which seems to be the essential function of trans-translation. Required for trans-translation. Probably required for sporulation; deletion of the gene for tmRNA impairs sporulation via its effect on trans-translation, and as smpB is required for trans-translation under non-stress conditions, it is also probably required during sporulation. This chain is SsrA-binding protein, found in Bacillus subtilis (strain 168).